We begin with the raw amino-acid sequence, 278 residues long: Large ribosomal subunit protein uL2 (278 aa).

Disordered regions lie at residues 1-58 (MAIR…GGGH) and 225-278 (VMNP…KNKR). The span at 37–58 (LHGRGGRNAHGRITTRHKGGGH) shows a compositional bias: basic residues. The segment covering 253-267 (PEGRTRKNKASDKMI) has biased composition (basic and acidic residues). Residues 268-278 (VRRRRTGKNKR) are compositionally biased toward basic residues.

The protein belongs to the universal ribosomal protein uL2 family. As to quaternary structure, part of the 50S ribosomal subunit. Forms a bridge to the 30S subunit in the 70S ribosome.

Functionally, one of the primary rRNA binding proteins. Required for association of the 30S and 50S subunits to form the 70S ribosome, for tRNA binding and peptide bond formation. It has been suggested to have peptidyltransferase activity; this is somewhat controversial. Makes several contacts with the 16S rRNA in the 70S ribosome. The polypeptide is Large ribosomal subunit protein uL2 (Rhodococcus erythropolis (strain PR4 / NBRC 100887)).